Reading from the N-terminus, the 376-residue chain is Homoserine dehydrogenase (376 aa).

Residues Asn-17 and Ile-18 each contribute to the NADP(+) site. An NAD(+)-binding site is contributed by Ile-18. 4 residues coordinate NADPH: Ile-18, Lys-67, Thr-99, and Lys-123. Positions 99 and 123 each coordinate NADP(+). NAD(+) is bound at residue Thr-99. Na(+)-binding residues include Glu-150, Val-153, Ala-155, and Leu-157. Ser-201 bears the Phosphoserine mark. Residues Gly-213 and Glu-216 each coordinate NADP(+). Glu-216 and Asp-227 together coordinate L-homoserine. The Proton donor role is filled by Lys-231. Gly-349 lines the NADP(+) pocket. Gly-349 contributes to the NAD(+) binding site. Gly-349 is a binding site for NADPH.

Belongs to the homoserine dehydrogenase family. A metal cation serves as cofactor.

The catalysed reaction is L-homoserine + NADP(+) = L-aspartate 4-semialdehyde + NADPH + H(+). It catalyses the reaction L-homoserine + NAD(+) = L-aspartate 4-semialdehyde + NADH + H(+). It functions in the pathway amino-acid biosynthesis; L-methionine biosynthesis via de novo pathway; L-homoserine from L-aspartate: step 3/3. Its pathway is amino-acid biosynthesis; L-threonine biosynthesis; L-threonine from L-aspartate: step 3/5. Its function is as follows. Catalyzes the conversion of L-aspartate-beta-semialdehyde (L-Asa) to L-homoserine (L-Hse), the third step in the biosynthesis of amino acids that derive from aspartate (the aspartate family of amino acids), including methioinine and threonine, the latter of which is a precursor to isoleucine; production of homoserine leads to a branch-point in the pathway as it can either be O-phosphorylated for processing to threonine, or O-acylated for processing to methionine. This Schizosaccharomyces pombe (strain 972 / ATCC 24843) (Fission yeast) protein is Homoserine dehydrogenase.